The following is a 583-amino-acid chain: L-arabonate dehydratase (583 aa).

[4Fe-4S] cluster is bound by residues Cys-56, Cys-124, and Cys-197.

This sequence belongs to the IlvD/Edd family. As to quaternary structure, homodimer. The cofactor is [4Fe-4S] cluster.

The catalysed reaction is L-arabinonate = 2-dehydro-3-deoxy-L-arabinonate + H2O. Its activity is regulated as follows. Activity is enhanced by Mg(2+), being optimal with a concentration of 1-10 mM Mg(2+). Catalyzes the dehydration of L-arabonate to L-2-keto-3-deoxyarabonate (L-KDA). Is involved in a degradation pathway of L-arabinose that allows A.brasilense to grow on L-arabinose as a sole carbon source. To a lesser extent, can also use D-xylonate as substrate, but not D-galactonate, D-arabonate, and D-gluconate. The chain is L-arabonate dehydratase (araC) from Azospirillum brasilense.